Reading from the N-terminus, the 349-residue chain is Phosphoribosylformylglycinamidine cyclo-ligase (349 aa).

Belongs to the AIR synthase family.

It is found in the cytoplasm. The catalysed reaction is 2-formamido-N(1)-(5-O-phospho-beta-D-ribosyl)acetamidine + ATP = 5-amino-1-(5-phospho-beta-D-ribosyl)imidazole + ADP + phosphate + H(+). Its pathway is purine metabolism; IMP biosynthesis via de novo pathway; 5-amino-1-(5-phospho-D-ribosyl)imidazole from N(2)-formyl-N(1)-(5-phospho-D-ribosyl)glycinamide: step 2/2. The protein is Phosphoribosylformylglycinamidine cyclo-ligase of Trichlorobacter lovleyi (strain ATCC BAA-1151 / DSM 17278 / SZ) (Geobacter lovleyi).